A 135-amino-acid polypeptide reads, in one-letter code: Large-conductance mechanosensitive channel (135 aa).

The next 2 membrane-spanning stretches (helical) occupy residues 10-30 (FAMK…AAFG) and 76-96 (GAFI…FCAI).

It belongs to the MscL family. Homopentamer.

It localises to the cell inner membrane. Channel that opens in response to stretch forces in the membrane lipid bilayer. May participate in the regulation of osmotic pressure changes within the cell. This Proteus mirabilis (strain HI4320) protein is Large-conductance mechanosensitive channel.